The following is a 364-amino-acid chain: Alanine racemase (364 aa).

The active-site Proton acceptor; specific for D-alanine is lysine 34. The residue at position 34 (lysine 34) is an N6-(pyridoxal phosphate)lysine. Arginine 129 contacts substrate. The active-site Proton acceptor; specific for L-alanine is the tyrosine 259. Methionine 307 lines the substrate pocket.

Belongs to the alanine racemase family. Pyridoxal 5'-phosphate is required as a cofactor.

The catalysed reaction is L-alanine = D-alanine. The protein operates within amino-acid biosynthesis; D-alanine biosynthesis; D-alanine from L-alanine: step 1/1. In terms of biological role, catalyzes the interconversion of L-alanine and D-alanine. May also act on other amino acids. The polypeptide is Alanine racemase (alr) (Coxiella burnetii (strain CbuK_Q154) (Coxiella burnetii (strain Q154))).